Consider the following 320-residue polypeptide: NAD kinase (320 aa).

D96 serves as the catalytic Proton acceptor. Residues 96-97 (DG), R101, 170-171 (NE), D200, and 211-216 (TAYAFS) each bind NAD(+).

It belongs to the NAD kinase family. A divalent metal cation is required as a cofactor.

It is found in the cytoplasm. It catalyses the reaction NAD(+) + ATP = ADP + NADP(+) + H(+). Its function is as follows. Involved in the regulation of the intracellular balance of NAD and NADP, and is a key enzyme in the biosynthesis of NADP. Catalyzes specifically the phosphorylation on 2'-hydroxyl of the adenosine moiety of NAD to yield NADP. The sequence is that of NAD kinase from Rhodococcus jostii (strain RHA1).